The following is a 740-amino-acid chain: N-acetylated-alpha-linked acidic dipeptidase 2 (740 aa).

The Cytoplasmic segment spans residues 1–7 (MARPRHL). Residues 8 to 31 (RGLGMCITAVLASFIAGFTVGWFI) traverse the membrane as a helical; Signal-anchor for type II membrane protein segment. Over 32–740 (KPLKETTTSA…AAAGTLTNVL (709 aa)) the chain is Extracellular. Residues asparagine 111, asparagine 143, and asparagine 185 are each glycosylated (N-linked (GlcNAc...) asparagine). Substrate contacts are provided by arginine 200 and asparagine 247. Ca(2+) is bound by residues threonine 259 and tyrosine 262. Residues 264 to 577 (AKEYTFRLPV…QLRGALVYEL (314 aa)) are NAALADase. N-linked (GlcNAc...) asparagine glycosylation is present at asparagine 314. Zn(2+) is bound by residues histidine 367 and aspartate 377. Glutamate 414 contributes to the substrate binding site. The active-site Nucleophile; for NAALADase activity is glutamate 414. Position 415 (glutamate 415) interacts with Zn(2+). Residues glutamate 423 and glutamate 426 each contribute to the Ca(2+) site. A Zn(2+)-binding site is contributed by aspartate 443. Asparagine 449 carries N-linked (GlcNAc...) asparagine glycosylation. Residues 507-508 (SG), 524-526 (RAR), tyrosine 542, and 542-543 (YH) contribute to the substrate site. Zn(2+) is bound at residue histidine 543. The N-linked (GlcNAc...) asparagine glycan is linked to asparagine 603. Serine 618 functions as the Charge relay system in the catalytic mechanism. Asparagine 628 is a glycosylation site (N-linked (GlcNAc...) asparagine). Residues aspartate 656 and histidine 679 each act as charge relay system in the active site. A substrate-binding site is contributed by 689 to 690 (KY).

It belongs to the peptidase M28 family. M28B subfamily. Homodimer. The cofactor is Zn(2+). In terms of tissue distribution, expressed ovary, testes and lung, but not brain.

Its subcellular location is the cell membrane. It carries out the reaction Release of an unsubstituted, C-terminal glutamyl residue, typically from Ac-Asp-Glu or folylpoly-gamma-glutamates.. Has N-acetylated-alpha-linked-acidic dipeptidase (NAALADase) activity. Also exhibits a dipeptidyl-peptidase IV type activity. Inactivates the peptide neurotransmitter N-acetylaspartylglutamate. This chain is N-acetylated-alpha-linked acidic dipeptidase 2 (Naalad2), found in Mus musculus (Mouse).